The sequence spans 545 residues: DnaJ homolog subfamily C member 21 (545 aa).

A J domain is found at Cys3–Arg69. Disordered stretches follow at residues Glu122 to Glu141, Glu276 to Val302, Ser331 to Asn497, and His522 to Arg545. 2 stretches are compositionally biased toward acidic residues: residues Glu129–Glu141 and Asp283–Glu295. The stretch at Arg180–Asp286 forms a coiled coil. The C2H2-type 1 zinc-finger motif lies at Leu323–His347. The segment covering Lys339–Arg348 has biased composition (basic residues). Acidic residues predominate over residues Arg372–Asn388. Over residues Lys394–Gln406 the composition is skewed to basic residues. A C2H2-type 2 zinc finger spans residues Leu498 to His522. Over residues Ser535–Arg545 the composition is skewed to basic residues.

Functionally, may act as a co-chaperone for HSP70. In Danio rerio (Zebrafish), this protein is DnaJ homolog subfamily C member 21 (dnajc21).